The primary structure comprises 136 residues: uncharacterized protein (136 aa).

It localises to the mitochondrion. This is an uncharacterized protein from Arabidopsis thaliana (Mouse-ear cress).